A 667-amino-acid polypeptide reads, in one-letter code: Gamma-tubulin complex component 4 (667 aa).

The tract at residues 424-446 (DHKADATQPREVPSRETSPREAP) is disordered.

This sequence belongs to the TUBGCP family. In terms of assembly, component of the gamma-tubulin ring complex (gTuRC) consisting of TUBGCP2, TUBGCP3, TUBGCP4, TUBGCP5 and TUBGCP6 and gamma-tubulin TUBG1 or TUBG2. TUBGCP2, TUBGCP3, TUBGCP4, TUBGCP5 and TUBGCP6 assemble in a 5:5:2:1:1 stoichiometry; each is associated with a gamma-tubulin, thereby arranging 14 gamma-tubulins in a helical manner. Gamma-tubulin at the first position is blocked by TUBGCP3 at the last position, allowing 13 protafilaments to grow into a microtubule. The gTuRC (via TUBGCP3 and TUBGCP6) interacts with ACTB and MZT1; the interactions form a luminal bridge that stabilizes the initial structure during complex assembly. The gTuRC (via TUBGCP2) interacts with MZT2A/MZT2B and CDK5RAP2 (via CM1 motif); the interactions play a role in gTuRC activation. Interacts with NINL. Interacts with ATF5; the ATF5:PCNT:polyglutamylated tubulin (PGT) tripartite unites the mother centriole and the pericentriolar material (PCM) in the centrosome.

The protein localises to the cytoplasm. It is found in the cytoskeleton. It localises to the microtubule organizing center. Its subcellular location is the centrosome. Its function is as follows. Component of the gamma-tubulin ring complex (gTuRC) which mediates microtubule nucleation. The gTuRC regulates the minus-end nucleation of alpha-beta tubulin heterodimers that grow into microtubule protafilaments, a critical step in centrosome duplication and spindle formation. This Mus musculus (Mouse) protein is Gamma-tubulin complex component 4 (Tubgcp4).